We begin with the raw amino-acid sequence, 189 residues long: Elongation factor P (189 aa).

Position 34 is an N6-(3,6-diaminohexanoyl)-5-hydroxylysine (Lys-34).

Belongs to the elongation factor P family. Post-translationally, may be beta-lysylated on the epsilon-amino group of Lys-34 by the combined action of EpmA and EpmB, and then hydroxylated on the C5 position of the same residue by EpmC (if this protein is present). Lysylation is critical for the stimulatory effect of EF-P on peptide-bond formation. The lysylation moiety may extend toward the peptidyltransferase center and stabilize the terminal 3-CCA end of the tRNA. Hydroxylation of the C5 position on Lys-34 may allow additional potential stabilizing hydrogen-bond interactions with the P-tRNA.

The protein resides in the cytoplasm. It participates in protein biosynthesis; polypeptide chain elongation. Functionally, involved in peptide bond synthesis. Alleviates ribosome stalling that occurs when 3 or more consecutive Pro residues or the sequence PPG is present in a protein, possibly by augmenting the peptidyl transferase activity of the ribosome. Modification of Lys-34 is required for alleviation. This is Elongation factor P from Buchnera aphidicola subsp. Acyrthosiphon pisum (strain APS) (Acyrthosiphon pisum symbiotic bacterium).